The chain runs to 572 residues: MSSPFSVPSLIMEEEGRFEAEVAEVEAWWGTDRFRLTKRPYTARDVALLRGTLRQSYASGDMAKKLWRTLRAHQANGTASRTFGALDPVQVAMMAKHLDTVYVSGWQCSSTHTSTNEPGPDLADYPYDTVPNKVEHLFFAQLYHDRKQREARMSMSRAERAHEPYVDYLKPIIADGDTGFGGATATVKLCKLFVERGAAGVHLEDQSSVTKKCGHMAGKVLVAVSEHVNRLVAARLQFDIMGVETVLVARTDAVAATLIQTNVDARDHQFILGATNPRLRNRSLAAVLSDAMSAGKNGRELQAIEDEWLATAQLKTFSDCVRDAIASLNATDADKQRKLQEWSAATSHDKCVPLEQARDIAAGLGVTSLFWDWDLPRTREGFYRFRGSVAAAVVRGRAFAPHADVLWMETSSPNIAECTAFAEGVRAASPGAMLAYNLSPSFNWDASGMTDADMSEFIPRVARLGYVWQFITLAGFHADALVTDTFARDFARRGMLAYVERIQREERSNGVETLQHQKWSGANFYDRVLKTVQGGISSTAAMGKGVTEEQFKGSWTGPGSESSSHVLAKSRM.

104–106 (SGW) serves as a coordination point for substrate. Residue Asp175 participates in Mg(2+) binding. Catalysis depends on Cys213, which acts as the Proton acceptor. Substrate-binding positions include 214 to 215 (GH), Arg250, 437 to 441 (NLSPS), and Thr472. The tract at residues 550-572 (QFKGSWTGPGSESSSHVLAKSRM) is disordered. The Microbody targeting signal motif lies at 570-572 (SRM).

The protein belongs to the isocitrate lyase/PEP mutase superfamily. Isocitrate lyase family. The cofactor is Mg(2+). In terms of tissue distribution, expressed in leaves.

The protein resides in the glyoxysome. The enzyme catalyses D-threo-isocitrate = glyoxylate + succinate. It functions in the pathway carbohydrate metabolism; glyoxylate cycle; (S)-malate from isocitrate: step 1/2. Functionally, involved in storage lipid mobilization during the growth of higher plant seedling. This chain is Isocitrate lyase, found in Oryza sativa subsp. japonica (Rice).